The primary structure comprises 133 residues: Small ribosomal subunit protein eS17 (133 aa).

The protein belongs to the eukaryotic ribosomal protein eS17 family.

In Spodoptera frugiperda (Fall armyworm), this protein is Small ribosomal subunit protein eS17 (RpS17).